The chain runs to 497 residues: Glutamate--tRNA ligase (497 aa).

The 'HIGH' region motif lies at Pro-12 to Asn-22. The 'KMSKS' region motif lies at Lys-259 to Arg-263. Position 262 (Lys-262) interacts with ATP.

It belongs to the class-I aminoacyl-tRNA synthetase family. Glutamate--tRNA ligase type 1 subfamily. In terms of assembly, monomer.

It is found in the cytoplasm. It carries out the reaction tRNA(Glu) + L-glutamate + ATP = L-glutamyl-tRNA(Glu) + AMP + diphosphate. In terms of biological role, catalyzes the attachment of glutamate to tRNA(Glu) in a two-step reaction: glutamate is first activated by ATP to form Glu-AMP and then transferred to the acceptor end of tRNA(Glu). This is Glutamate--tRNA ligase from Lacticaseibacillus casei (strain BL23) (Lactobacillus casei).